The chain runs to 264 residues: Apolipoprotein A-I (264 aa).

Positions 1–18 are cleaved as a signal peptide; the sequence is MKAVLLVVAALFLAGSQA. 2 consecutive repeat copies span residues 67–88 and 89–110. Positions 67–264 are 10 X approximate tandem repeats; sequence LRLSDNWDTL…DQASKQLAAQ (198 aa). A 3; half-length repeat occupies 111–121; sequence EDLQDVKHKVQ. 5 consecutive repeat copies span residues 122–143, 144–165, 166–187, 188–207, and 208–229. Methionine sulfoxide is present on methionine 193. A 9; half-length repeat occupies 230–240; it reads PALEDLRQGLL. Repeat unit 10 spans residues 241-264; sequence PVLENLKASILSSIDQASKQLAAQ.

This sequence belongs to the apolipoprotein A1/A4/E family. As to quaternary structure, homodimer. Interacts with APOA1BP and CLU. Component of a sperm activating protein complex (SPAP), consisting of APOA1, an immunoglobulin heavy chain, an immunoglobulin light chain and albumin. Interacts with NDRG1. Interacts with SCGB3A2. Interacts with NAXE and YJEFN3. Post-translationally, glycosylated. In terms of processing, palmitoylated. Phosphorylation sites are present in the extracellular medium.

The protein resides in the secreted. In terms of biological role, participates in the reverse transport of cholesterol from tissues to the liver for excretion by promoting cholesterol efflux from tissues and by acting as a cofactor for the lecithin cholesterol acyltransferase (LCAT). As part of the SPAP complex, activates spermatozoa motility. The sequence is that of Apolipoprotein A-I (APOA1) from Cavia porcellus (Guinea pig).